A 407-amino-acid polypeptide reads, in one-letter code: Multifunctional CCA protein (407 aa).

ATP is bound by residues glycine 8 and arginine 11. Residues glycine 8 and arginine 11 each coordinate CTP. Positions 21 and 23 each coordinate Mg(2+). Positions 91, 137, and 140 each coordinate ATP. Residues arginine 91, arginine 137, and arginine 140 each contribute to the CTP site. In terms of domain architecture, HD spans 228–329; that stretch reads SGIHTLMVAQ…IKIFDKMDVW (102 aa).

It belongs to the tRNA nucleotidyltransferase/poly(A) polymerase family. Bacterial CCA-adding enzyme type 1 subfamily. As to quaternary structure, monomer. Can also form homodimers and oligomers. It depends on Mg(2+) as a cofactor. Ni(2+) is required as a cofactor.

It catalyses the reaction a tRNA precursor + 2 CTP + ATP = a tRNA with a 3' CCA end + 3 diphosphate. The catalysed reaction is a tRNA with a 3' CCA end + 2 CTP + ATP = a tRNA with a 3' CCACCA end + 3 diphosphate. Catalyzes the addition and repair of the essential 3'-terminal CCA sequence in tRNAs without using a nucleic acid template. Adds these three nucleotides in the order of C, C, and A to the tRNA nucleotide-73, using CTP and ATP as substrates and producing inorganic pyrophosphate. tRNA 3'-terminal CCA addition is required both for tRNA processing and repair. Also involved in tRNA surveillance by mediating tandem CCA addition to generate a CCACCA at the 3' terminus of unstable tRNAs. While stable tRNAs receive only 3'-terminal CCA, unstable tRNAs are marked with CCACCA and rapidly degraded. This is Multifunctional CCA protein from Aliivibrio fischeri (strain MJ11) (Vibrio fischeri).